We begin with the raw amino-acid sequence, 418 residues long: Tyrosine--tRNA ligase 1 (418 aa).

L-tyrosine is bound at residue Y34. A 'HIGH' region motif is present at residues 39-48; that stretch reads PTADSLHIGH. The L-tyrosine site is built by Y169 and Q173. The 'KMSKS' region signature appears at 230-234; the sequence is KFGKT. Residue K233 participates in ATP binding. Residues 352–418 enclose the S4 RNA-binding domain; that stretch reads TVLIDLLVES…GKKKYFLIRY (67 aa).

This sequence belongs to the class-I aminoacyl-tRNA synthetase family. TyrS type 1 subfamily. As to quaternary structure, homodimer.

Its subcellular location is the cytoplasm. The enzyme catalyses tRNA(Tyr) + L-tyrosine + ATP = L-tyrosyl-tRNA(Tyr) + AMP + diphosphate + H(+). Catalyzes the attachment of tyrosine to tRNA(Tyr) in a two-step reaction: tyrosine is first activated by ATP to form Tyr-AMP and then transferred to the acceptor end of tRNA(Tyr). The protein is Tyrosine--tRNA ligase 1 of Bacillus cereus (strain ATCC 10987 / NRS 248).